The chain runs to 193 residues: Peptidyl-tRNA hydrolase (193 aa).

A tRNA-binding site is contributed by Tyr14. His19 functions as the Proton acceptor in the catalytic mechanism. Positions 64, 66, and 112 each coordinate tRNA.

Belongs to the PTH family. Monomer.

It localises to the cytoplasm. The enzyme catalyses an N-acyl-L-alpha-aminoacyl-tRNA + H2O = an N-acyl-L-amino acid + a tRNA + H(+). Its function is as follows. Hydrolyzes ribosome-free peptidyl-tRNAs (with 1 or more amino acids incorporated), which drop off the ribosome during protein synthesis, or as a result of ribosome stalling. Catalyzes the release of premature peptidyl moieties from peptidyl-tRNA molecules trapped in stalled 50S ribosomal subunits, and thus maintains levels of free tRNAs and 50S ribosomes. This is Peptidyl-tRNA hydrolase from Bartonella henselae (strain ATCC 49882 / DSM 28221 / CCUG 30454 / Houston 1) (Rochalimaea henselae).